The following is a 1031-amino-acid chain: Kinesin heavy chain (1031 aa).

The 318-residue stretch at 8 to 325 folds into the Kinesin motor domain; sequence NIKVVCRVRP…LMFGQRAKTI (318 aa). 84-91 serves as a coordination point for ATP; it reads GQTSSGKT. Residues 393–857 are a coiled coil; the sequence is PKQMTVHVSE…RDNADLRCEL (465 aa). Positions 673 to 686 are enriched in basic and acidic residues; that stretch reads TDQEDKKREEEDKM. 2 disordered regions span residues 673–692 and 906–1031; these read TDQE…ATEM and RNFA…EQGS. Residues 858–1031 form a globular region; that stretch reads PKLERRLRAT…PLTTSGEQGS (174 aa). A compositionally biased stretch (gly residues) spans 932 to 949; that stretch reads GSTGIRGGGYSGIRGGGS. Polar residues-rich tracts occupy residues 964-977 and 1014-1031; these read SHNN…NPND and RNNT…EQGS.

This sequence belongs to the TRAFAC class myosin-kinesin ATPase superfamily. Kinesin family. Kinesin subfamily. As to quaternary structure, oligomer composed of two heavy chains and two light chains.

The protein resides in the cytoplasm. Its subcellular location is the cytoskeleton. In terms of biological role, kinesin is a microtubule-associated force-producing protein that may play a role in organelle transport. The polypeptide is Kinesin heavy chain (Strongylocentrotus purpuratus (Purple sea urchin)).